We begin with the raw amino-acid sequence, 490 residues long: N-succinylglutamate 5-semialdehyde dehydrogenase (490 aa).

Residue 224–229 (GSSPTG) participates in NAD(+) binding. Residues glutamate 247 and cysteine 281 contribute to the active site.

It belongs to the aldehyde dehydrogenase family. AstD subfamily.

It carries out the reaction N-succinyl-L-glutamate 5-semialdehyde + NAD(+) + H2O = N-succinyl-L-glutamate + NADH + 2 H(+). It participates in amino-acid degradation; L-arginine degradation via AST pathway; L-glutamate and succinate from L-arginine: step 4/5. Functionally, catalyzes the NAD-dependent reduction of succinylglutamate semialdehyde into succinylglutamate. The protein is N-succinylglutamate 5-semialdehyde dehydrogenase of Hahella chejuensis (strain KCTC 2396).